The chain runs to 86 residues: Anti-adapter protein IraP (86 aa).

A coiled-coil region spans residues 1–36; sequence MKNLIAELLFKLAQKEEESKELCAQVEALEIIVTAM.

Belongs to the IraP family. In terms of assembly, interacts with RssB.

It is found in the cytoplasm. Its function is as follows. Inhibits RpoS proteolysis by regulating RssB activity, thereby increasing the stability of the sigma stress factor RpoS especially during phosphate starvation, but also in stationary phase and during nitrogen starvation. Its effect on RpoS stability is due to its interaction with RssB, which probably blocks the interaction of RssB with RpoS, and the consequent delivery of the RssB-RpoS complex to the ClpXP protein degradation pathway. This is Anti-adapter protein IraP from Shigella flexneri serotype 5b (strain 8401).